A 313-amino-acid polypeptide reads, in one-letter code: Ribosomal RNA small subunit methyltransferase H (313 aa).

S-adenosyl-L-methionine contacts are provided by residues 35 to 37, D55, F81, D103, and Q110; that span reads GGH.

This sequence belongs to the methyltransferase superfamily. RsmH family.

It localises to the cytoplasm. It catalyses the reaction cytidine(1402) in 16S rRNA + S-adenosyl-L-methionine = N(4)-methylcytidine(1402) in 16S rRNA + S-adenosyl-L-homocysteine + H(+). In terms of biological role, specifically methylates the N4 position of cytidine in position 1402 (C1402) of 16S rRNA. The chain is Ribosomal RNA small subunit methyltransferase H from Pseudomonas aeruginosa (strain UCBPP-PA14).